The chain runs to 253 residues: Sulfate transporter CysZ (253 aa).

4 helical membrane passes run 31 to 51 (FVIL…WWLF), 75 to 95 (LLWP…FSTI), 151 to 171 (IVLL…PVLW), and 222 to 242 (IPLL…AMWV).

This sequence belongs to the CysZ family.

Its subcellular location is the cell inner membrane. Its function is as follows. High affinity, high specificity proton-dependent sulfate transporter, which mediates sulfate uptake. Provides the sulfur source for the cysteine synthesis pathway. This chain is Sulfate transporter CysZ, found in Escherichia coli (strain 55989 / EAEC).